The chain runs to 341 residues: UDP-3-O-acylglucosamine N-acyltransferase 2 (341 aa).

H254 acts as the Proton acceptor in catalysis.

Belongs to the transferase hexapeptide repeat family. LpxD subfamily. As to quaternary structure, homotrimer.

It catalyses the reaction a UDP-3-O-[(3R)-3-hydroxyacyl]-alpha-D-glucosamine + a (3R)-hydroxyacyl-[ACP] = a UDP-2-N,3-O-bis[(3R)-3-hydroxyacyl]-alpha-D-glucosamine + holo-[ACP] + H(+). It functions in the pathway bacterial outer membrane biogenesis; LPS lipid A biosynthesis. In terms of biological role, catalyzes the N-acylation of UDP-3-O-acylglucosamine using 3-hydroxyacyl-ACP as the acyl donor. Is involved in the biosynthesis of lipid A, a phosphorylated glycolipid that anchors the lipopolysaccharide to the outer membrane of the cell. In Nitrobacter winogradskyi (strain ATCC 25391 / DSM 10237 / CIP 104748 / NCIMB 11846 / Nb-255), this protein is UDP-3-O-acylglucosamine N-acyltransferase 2.